The sequence spans 337 residues: Casein kinase I isoform alpha (337 aa).

One can recognise a Protein kinase domain in the interval 17–285 (YKLVRKIGSG…YLRQLFRILF (269 aa)). ATP contacts are provided by residues 23–31 (IGSGSFGDI) and Lys-46. The active-site Proton acceptor is Asp-136. Residues 309-325 (AASSSGQGQQAQTPTGK) are compositionally biased toward low complexity. The interval 309–337 (AASSSGQGQQAQTPTGKQTDKSKSNMKGF) is disordered.

This sequence belongs to the protein kinase superfamily. CK1 Ser/Thr protein kinase family. Casein kinase I subfamily. Post-translationally, autophosphorylated.

The protein localises to the cytoplasm. It is found in the cytoskeleton. It localises to the microtubule organizing center. The protein resides in the centrosome. Its subcellular location is the chromosome. The protein localises to the centromere. It is found in the kinetochore. It localises to the nucleus speckle. The protein resides in the cilium basal body. Its subcellular location is the spindle. The enzyme catalyses L-seryl-[protein] + ATP = O-phospho-L-seryl-[protein] + ADP + H(+). It carries out the reaction L-threonyl-[protein] + ATP = O-phospho-L-threonyl-[protein] + ADP + H(+). In terms of biological role, casein kinases are operationally defined by their preferential utilization of acidic proteins such as caseins as substrates. It can phosphorylate a large number of proteins. Participates in Wnt signaling. May play a role in segregating chromosomes during mitosis. May play a role in keratin cytoskeleton disassembly. This Gallus gallus (Chicken) protein is Casein kinase I isoform alpha (CSNK1A1).